A 263-amino-acid polypeptide reads, in one-letter code: Receptor-transporting protein 1 (263 aa).

Residues Met1 to Ser238 lie on the Cytoplasmic side of the membrane. The 3CxxC-type zinc-finger motif lies at Ala88–Gly197. The chain crosses the membrane as a helical span at residues Ile239–Phe259. Residues Arg260–Val263 are Extracellular-facing.

It belongs to the TMEM7 family. As to quaternary structure, interacts with olfactory receptors. In terms of tissue distribution, predominantly expressed in olfactory and vomeronasal organs, in mature olfactory sensory neurons.

It is found in the cell membrane. Functionally, specifically promotes functional cell surface expression of olfactory receptors, but not of other GPCRs. This chain is Receptor-transporting protein 1 (Rtp1), found in Mus musculus (Mouse).